We begin with the raw amino-acid sequence, 248 residues long: Large ribosomal subunit protein uL29m (248 aa).

2 disordered regions span residues 77-107 (VSKYPLPRPVKPKEQEKRPSNPKHGLWGFFG) and 223-248 (AYEPPALDVEEPKGEASDSVKTPPSS).

The protein belongs to the universal ribosomal protein uL29 family. As to quaternary structure, component of the mitochondrial large ribosomal subunit. Mature mitochondrial ribosomes consist of a small (37S) and a large (54S) subunit. The 37S subunit contains at least 33 different proteins and 1 molecule of RNA (15S). The 54S subunit contains at least 45 different proteins and 1 molecule of RNA (21S).

It localises to the mitochondrion. This is Large ribosomal subunit protein uL29m (MRPL4) from Ajellomyces capsulatus (strain NAm1 / WU24) (Darling's disease fungus).